The following is a 403-amino-acid chain: E2F transcription factor-like E2FE (403 aa).

A DNA-binding region spans residues 34–99; that stretch reads RKQKSLGLLC…RAKNQYTWKG (66 aa). The disordered stretch occupies residues 128–167; sequence VKGSDDEDDDEESSQPHSSSQTDSSKPGSLPQSSDPSKID. A compositionally biased stretch (low complexity) spans 142 to 152; that stretch reads QPHSSSQTDSS. Positions 153–163 are enriched in polar residues; the sequence is KPGSLPQSSDP. Residues 169 to 250 mediate DNA binding; the sequence is RREKSLGLLT…SRKPAFKWLG (82 aa). The disordered stretch occupies residues 282 to 319; it reads VKRSKSSSSSQENATERRLKMKKHSTPESSYNKSFDVH.

The protein belongs to the E2F/DP family. In terms of tissue distribution, expressed exclusively in mitotically dividing cells. Highly expressed in young leaves and mature flowers. Lower expression in young stalk and in young and mature flowers.

The protein localises to the nucleus. Functionally, inhibitor of E2F-dependent activation of gene expression. Binds specifically the E2 recognition site without interacting with DP proteins and prevents transcription activation by E2F/DP heterodimers. Controls the timing of endocycle onset and inhibits endoreduplication. The protein is E2F transcription factor-like E2FE (E2FE) of Arabidopsis thaliana (Mouse-ear cress).